The primary structure comprises 250 residues: UPF0524 protein C3orf70 (250 aa).

A disordered region spans residues glutamate 201 to valine 250. Positions serine 202 to glutamate 229 are enriched in acidic residues.

Belongs to the UPF0524 family.

Functionally, may play a role in neuronal and neurobehavioral development. The sequence is that of UPF0524 protein C3orf70 (C3orf70) from Homo sapiens (Human).